A 201-amino-acid polypeptide reads, in one-letter code: Glycerol-3-phosphate acyltransferase (201 aa).

5 helical membrane passes run 5-25 (LLGA…FGVV), 55-75 (KMGV…ILLA), 88-108 (WSTA…WLGF), 118-138 (LGIF…GYAV), and 164-184 (TYGV…LIFL).

It belongs to the PlsY family. In terms of assembly, probably interacts with PlsX.

The protein resides in the cell inner membrane. The catalysed reaction is an acyl phosphate + sn-glycerol 3-phosphate = a 1-acyl-sn-glycero-3-phosphate + phosphate. It functions in the pathway lipid metabolism; phospholipid metabolism. Its function is as follows. Catalyzes the transfer of an acyl group from acyl-phosphate (acyl-PO(4)) to glycerol-3-phosphate (G3P) to form lysophosphatidic acid (LPA). This enzyme utilizes acyl-phosphate as fatty acyl donor, but not acyl-CoA or acyl-ACP. The polypeptide is Glycerol-3-phosphate acyltransferase (Anaeromyxobacter dehalogenans (strain 2CP-C)).